The sequence spans 236 residues: Uridylate kinase (236 aa).

10–13 serves as a coordination point for ATP; that stretch reads KLSG. A UMP-binding site is contributed by Gly-52. ATP is bound by residues Gly-53 and Arg-57. Residues Asp-72 and 133–140 contribute to the UMP site; that span reads TGNPFFTT. ATP contacts are provided by Thr-160, Tyr-166, and Asp-169.

This sequence belongs to the UMP kinase family. In terms of assembly, homohexamer.

The protein resides in the cytoplasm. It catalyses the reaction UMP + ATP = UDP + ADP. Its pathway is pyrimidine metabolism; CTP biosynthesis via de novo pathway; UDP from UMP (UMPK route): step 1/1. Its activity is regulated as follows. Inhibited by UTP. Functionally, catalyzes the reversible phosphorylation of UMP to UDP. This chain is Uridylate kinase, found in Polaromonas sp. (strain JS666 / ATCC BAA-500).